The chain runs to 284 residues: Tropomyosin (284 aa).

Residues 1-273 adopt a coiled-coil conformation; the sequence is MDAIKKKMLA…KEKYKAISDE (273 aa).

It belongs to the tropomyosin family. As to quaternary structure, homodimer.

In terms of biological role, tropomyosin, in association with the troponin complex, plays a central role in the calcium dependent regulation of muscle contraction. The polypeptide is Tropomyosin (Haliotis diversicolor (Abalone)).